The sequence spans 322 residues: UDP-N-acetylenolpyruvoylglucosamine reductase (322 aa).

In terms of domain architecture, FAD-binding PCMH-type spans 36–202 (RAGGPAQVLF…TSVLFEGVPG (167 aa)). Arginine 182 is an active-site residue. Residue serine 231 is the Proton donor of the active site. Residue glutamate 301 is part of the active site.

It belongs to the MurB family. It depends on FAD as a cofactor.

It is found in the cytoplasm. It carries out the reaction UDP-N-acetyl-alpha-D-muramate + NADP(+) = UDP-N-acetyl-3-O-(1-carboxyvinyl)-alpha-D-glucosamine + NADPH + H(+). It functions in the pathway cell wall biogenesis; peptidoglycan biosynthesis. Functionally, cell wall formation. The protein is UDP-N-acetylenolpyruvoylglucosamine reductase of Brucella suis (strain ATCC 23445 / NCTC 10510).